A 337-amino-acid polypeptide reads, in one-letter code: Nucleoid-associated protein HS_0228 (337 aa).

It belongs to the YejK family.

Its subcellular location is the cytoplasm. The protein localises to the nucleoid. This is Nucleoid-associated protein HS_0228 from Histophilus somni (strain 129Pt) (Haemophilus somnus).